Consider the following 532-residue polypeptide: Cytochrome P450 monooxygenase pgmC (532 aa).

The chain crosses the membrane as a helical span at residues 15–32; sequence ISTLAVLIGFIALLTAWL. Residue C438 participates in heme binding.

It belongs to the cytochrome P450 family. Requires heme as cofactor.

Its subcellular location is the membrane. The protein operates within pigment biosynthesis. Its pathway is secondary metabolite biosynthesis. Cytochrome P450 monooxygenase; part of the gene cluster that mediates the biosynthesis of pleosporalin A, ascomycone A, as well as a third cryptic naphthoquinone derived pigment, all responsible for the coloration of conidia. Involved in the oxidation of fusarubinaldehyde at C-9. PgmC has low substrate-specificity and is also able to use the pgmA product 3-acetonyl-1,6,8-trihydroxy-2-naphthaldehyde as a substrate. The pathway begins with the biosynthesis of the cyclized heptaketide 3-acetonyl-1,6,8-trihydroxy-2-naphthaldehyde by the NR-PKS pgmA. The C-6 hydroxyl group is further methylated by the O-methyltransferase pgmB to yield fusarubinaldehyde which is in turn oxidized by the cytochrome P450 monooxygenase pgmC at C-9. The C-1 hydroxyl group is then methylated spontaneously. Although pgmE, pgmD and pgmH are essential for the production of pleosporalin A, it is not the case for the 2 other final products and it remains difficult to assign a specific function to each enzyme. PgmF and pgmG seem not to be involved in pigment biosynthesis although they were regulated by the cluster-specific transcription factor pgmR. In Aspergillus terreus (strain NIH 2624 / FGSC A1156), this protein is Cytochrome P450 monooxygenase pgmC.